The chain runs to 83 residues: Small ribosomal subunit protein bS16 (83 aa).

The protein belongs to the bacterial ribosomal protein bS16 family.

This chain is Small ribosomal subunit protein bS16, found in Azotobacter vinelandii (strain DJ / ATCC BAA-1303).